The sequence spans 1123 residues: Leucine-rich repeat receptor-like protein kinase PEPR1 (1123 aa).

The signal sequence occupies residues 1–28 (MKNLGGLFKILLLFFCLFLSTHIISVSC). Residues 29 to 769 (LNSDGLTLLS…SRKSGLSTWQ (741 aa)) are Extracellular-facing. The LRR 1 repeat unit spans residues 31-53 (SDGLTLLSLLKHLDRVPPQVTST). N-linked (GlcNAc...) asparagine glycosylation is found at Asn57, Asn81, Asn110, and Asn121. LRR repeat units lie at residues 74 to 98 (SKNV…IGEL), 99 to 122 (KSLQ…LGNC), 124 to 145 (KLAT…TLDS), 146 to 170 (LKRL…LFRI), 171 to 194 (PKLQ…IGDA), 196 to 218 (ELVE…IGNS), and 219 to 243 (SSLQ…NLLG). N-linked (GlcNAc...) asparagine glycans are attached at residues Asn182 and Asn217. 7 N-linked (GlcNAc...) asparagine glycosylation sites follow: Asn244, Asn252, Asn289, Asn302, Asn316, Asn321, and Asn337. LRR repeat units follow at residues 245–266 (LTTL…SPNC), 267–290 (KNLL…LGNC), 292–314 (SLDA…LGML), 315–338 (KNLT…LGNC), 340–362 (SLNL…LGKL), 363–386 (RKLE…IWKS), 388–410 (SLTQ…MTEM), 412–434 (KLKI…LGVN), 435–458 (SSLE…LCHG), 459–482 (RKLR…IGHC), 484–505 (TIRR…FSQD), 506–529 (HSLS…LGSC), 530–553 (KNLS…LGNL), 554–577 (QNLG…LSNC), 579–600 (SLER…NFSN), 601–625 (WKGL…LPEL), 626–650 (KKLS…GLIE), 652–674 (LIYD…LGDL), 675–696 (IKLT…VLKG), and 697–721 (LTSL…LEGQ). Asn398, Asn420, and Asn434 each carry an N-linked (GlcNAc...) asparagine glycan. Asn494 is a glycosylation site (N-linked (GlcNAc...) asparagine). 5 N-linked (GlcNAc...) asparagine glycosylation sites follow: Asn531, Asn536, Asn560, Asn591, and Asn597. N-linked (GlcNAc...) asparagine glycosylation is found at Asn681 and Asn686. N-linked (GlcNAc...) asparagine glycosylation occurs at Asn745. The helical transmembrane segment at 770–790 (IVLIAVLSSLLVLVVVLALVF) threads the bilayer. Residues 791–1123 (ICLRRRKGRP…ARSCSSDSVR (333 aa)) are Cytoplasmic-facing. Thr824 is subject to Phosphothreonine. The region spanning 827–1115 (LNEKYTIGRG…LLEDVKHLAR (289 aa)) is the Protein kinase domain. Residues 833 to 841 (IGRGAHGIV) and Lys855 contribute to the ATP site. 2 positions are modified to phosphotyrosine: Tyr901 and Tyr941. Catalysis depends on Asp954, which acts as the Proton acceptor. Tyr995 bears the Phosphotyrosine mark.

This sequence belongs to the protein kinase superfamily. Ser/Thr protein kinase family. In terms of assembly, interacts with PEP1 and BAK1. Interacts with BIK1 and PBL1. Post-translationally, N-glycosylated.

It localises to the cell membrane. The enzyme catalyses L-seryl-[protein] + ATP = O-phospho-L-seryl-[protein] + ADP + H(+). It catalyses the reaction L-threonyl-[protein] + ATP = O-phospho-L-threonyl-[protein] + ADP + H(+). Its function is as follows. Acts as a receptor for PEP defense peptides. Unlike typical immune receptors, senses an endogenous elicitor that potentiates pathogen-associated molecular pattern (PAMP)-inducible plant responses. Involved in PAMP-triggered immunity (PTI) signaling. Interacts with and phosphorylates the kinase BIK1, a central rate-limiting kinase in PTI signaling. The polypeptide is Leucine-rich repeat receptor-like protein kinase PEPR1 (PEPR1) (Arabidopsis thaliana (Mouse-ear cress)).